Here is a 115-residue protein sequence, read N- to C-terminus: T cell receptor beta variable 7-6 (115 aa).

The signal sequence occupies residues 1-21 (MGTSLLCWVVLGFLGTDHTGA). In terms of domain architecture, Ig-like spans 22–115 (GVSQSPRYKV…SAMYRCASSL (94 aa)). The cysteines at positions 42 and 111 are disulfide-linked.

In terms of assembly, alpha-beta TR is a heterodimer composed of an alpha and beta chain; disulfide-linked. The alpha-beta TR is associated with the transmembrane signaling CD3 coreceptor proteins to form the TR-CD3 (TcR or TCR). The assembly of alpha-beta TR heterodimers with CD3 occurs in the endoplasmic reticulum where a single alpha-beta TR heterodimer associates with one CD3D-CD3E heterodimer, one CD3G-CD3E heterodimer and one CD247 homodimer forming a stable octameric structure. CD3D-CD3E and CD3G-CD3E heterodimers preferentially associate with TR alpha and TR beta chains, respectively. The association of the CD247 homodimer is the last step of TcR assembly in the endoplasmic reticulum and is required for transport to the cell surface.

The protein localises to the cell membrane. Functionally, v region of the variable domain of T cell receptor (TR) beta chain that participates in the antigen recognition. Alpha-beta T cell receptors are antigen specific receptors which are essential to the immune response and are present on the cell surface of T lymphocytes. Recognize peptide-major histocompatibility (MH) (pMH) complexes that are displayed by antigen presenting cells (APC), a prerequisite for efficient T cell adaptive immunity against pathogens. Binding of alpha-beta TR to pMH complex initiates TR-CD3 clustering on the cell surface and intracellular activation of LCK that phosphorylates the ITAM motifs of CD3G, CD3D, CD3E and CD247 enabling the recruitment of ZAP70. In turn ZAP70 phosphorylates LAT, which recruits numerous signaling molecules to form the LAT signalosome. The LAT signalosome propagates signal branching to three major signaling pathways, the calcium, the mitogen-activated protein kinase (MAPK) kinase and the nuclear factor NF-kappa-B (NF-kB) pathways, leading to the mobilization of transcription factors that are critical for gene expression and essential for T cell growth and differentiation. The T cell repertoire is generated in the thymus, by V-(D)-J rearrangement. This repertoire is then shaped by intrathymic selection events to generate a peripheral T cell pool of self-MH restricted, non-autoaggressive T cells. Post-thymic interaction of alpha-beta TR with the pMH complexes shapes TR structural and functional avidity. The polypeptide is T cell receptor beta variable 7-6 (Homo sapiens (Human)).